The chain runs to 303 residues: N-acetyl-D-glucosamine kinase (303 aa).

ATP-binding positions include 4-11 (GFDVGGTK) and 133-140 (GFGGGLVF). Zn(2+) contacts are provided by histidine 157, cysteine 177, cysteine 179, and cysteine 184.

Belongs to the ROK (NagC/XylR) family. NagK subfamily.

The catalysed reaction is N-acetyl-D-glucosamine + ATP = N-acetyl-D-glucosamine 6-phosphate + ADP + H(+). Its pathway is cell wall biogenesis; peptidoglycan recycling. Catalyzes the phosphorylation of N-acetyl-D-glucosamine (GlcNAc) derived from cell-wall degradation, yielding GlcNAc-6-P. This Photobacterium profundum (strain SS9) protein is N-acetyl-D-glucosamine kinase.